Here is a 223-residue protein sequence, read N- to C-terminus: UPF0758 protein FMG_0357 (223 aa).

Residues 101 to 223 (SLNDPDSVAE…SLSMRKGMYF (123 aa)) enclose the MPN domain. Positions 172, 174, and 185 each coordinate Zn(2+). The JAMM motif signature appears at 172–185 (HNHPSGSLIPSNAD).

It belongs to the UPF0758 family.

In Finegoldia magna (strain ATCC 29328 / DSM 20472 / WAL 2508) (Peptostreptococcus magnus), this protein is UPF0758 protein FMG_0357.